The sequence spans 226 residues: Agamous-like MADS-box protein AGL23 (226 aa).

Positions L6–N66 constitute an MADS-box domain. Residues V95–W132 are a coiled coil. Over residues E108–E127 the composition is skewed to basic and acidic residues. The segment at E108–E131 is disordered.

It is found in the nucleus. Its function is as follows. Probable transcription factor that controls female gametophyte (megagametogenesis) development and chloroplast biogenesis during embryo development. The sequence is that of Agamous-like MADS-box protein AGL23 from Arabidopsis thaliana (Mouse-ear cress).